The sequence spans 83 residues: Retinal cone rhodopsin-sensitive cGMP 3',5'-cyclic phosphodiesterase subunit gamma (83 aa).

The segment at 1-54 is disordered; sequence MSDSPSLSPPAPSQGPTTPRKGPPKFKQRQTRQFKSKPPKKGVKGFGDDIPGME. A compositionally biased stretch (basic residues) spans 22 to 43; that stretch reads GPPKFKQRQTRQFKSKPPKKGV.

The protein belongs to the rod/cone cGMP-PDE gamma subunit family. As to quaternary structure, tetramer composed of two catalytic chains (alpha and beta), and two inhibitory chains (gamma).

The catalysed reaction is 3',5'-cyclic GMP + H2O = GMP + H(+). In terms of biological role, participates in processes of transmission and amplification of the visual signal. cGMP-PDEs are the effector molecules in G-protein-mediated phototransduction in vertebrate rods and cones. This chain is Retinal cone rhodopsin-sensitive cGMP 3',5'-cyclic phosphodiesterase subunit gamma (Pde6h), found in Mus musculus (Mouse).